The chain runs to 501 residues: Fumarate reductase 2 (501 aa).

A mitochondrion-targeting transit peptide spans M1 to S32. V37–N51 is a binding site for FAD. Catalysis depends on residues H281 and R304.

Belongs to the FAD-dependent oxidoreductase 2 family. FRD/SDH subfamily. The cofactor is FAD.

The protein localises to the mitochondrion. It catalyses the reaction succinate + NAD(+) = fumarate + NADH + H(+). Functionally, irreversibly catalyzes the reduction of fumarate to succinate. Together with the second isozyme of soluble fumarate reductase (FRD1), essential for anaerobic growth. Involved in maintaining redox balance during oxygen deficiency conditions. Reduction of fumarate is the main source of succinate during fermentation, and under anaerobic conditions, the formation of succinate is strictly required for the reoxidation of FADH(2). The sequence is that of Fumarate reductase 2 (OSM1) from Saccharomyces cerevisiae (strain ATCC 204508 / S288c) (Baker's yeast).